The primary structure comprises 232 residues: Uracil-DNA glycosylase (232 aa).

Asp71 functions as the Proton acceptor in the catalytic mechanism.

Belongs to the uracil-DNA glycosylase (UDG) superfamily. UNG family.

The protein resides in the cytoplasm. The enzyme catalyses Hydrolyzes single-stranded DNA or mismatched double-stranded DNA and polynucleotides, releasing free uracil.. Functionally, excises uracil residues from the DNA which can arise as a result of misincorporation of dUMP residues by DNA polymerase or due to deamination of cytosine. The protein is Uracil-DNA glycosylase of Azotobacter vinelandii (strain DJ / ATCC BAA-1303).